The sequence spans 232 residues: RNA chaperone ProQ (232 aa).

The disordered stretch occupies residues 105-182 (EAKARVQAQR…REEQHTPVSD (78 aa)). Positions 117 to 136 (QQAKKREAAAAAGEKEDAPR) are enriched in basic and acidic residues. A compositionally biased stretch (basic residues) spans 137 to 146 (RERKPRPTTP). Residues 147–177 (RRKEGAERKPRAQKPVEKAPKTAKAPREEQH) show a composition bias toward basic and acidic residues.

Belongs to the ProQ family.

Its subcellular location is the cytoplasm. RNA chaperone with significant RNA binding, RNA strand exchange and RNA duplexing activities. May regulate ProP activity through an RNA-based, post-transcriptional mechanism. The protein is RNA chaperone ProQ of Shigella dysenteriae serotype 1 (strain Sd197).